We begin with the raw amino-acid sequence, 117 residues long: DNA-directed RNA polymerase II subunit RPB11 (117 aa).

N-acetylmethionine is present on Met-1.

Belongs to the archaeal Rpo11/eukaryotic RPB11/RPC19 RNA polymerase subunit family. In terms of assembly, component of the RNA polymerase II (Pol II) core complex consisting of 12 subunits: a ten-subunit catalytic core composed of POLR2A/RPB1, POLR2B/RPB2, POLR2C/RPB3, POLR2I/RPB9, POLR2J/RPB11, POLR2E/RPABC1, POLR2F/RPABC2, POLR2H/RPABC3, POLR2K/RPABC4 and POLR2L/RPABC5 and a mobile stalk composed of two subunits POLR2D/RPB4 and POLR2G/RPB7, protruding from the core and functioning primarily in transcription initiation. Part of Pol II(G) complex, in which Pol II core associates with an additional subunit POLR2M; unlike conventional Pol II, Pol II(G) functions as a transcriptional repressor. Part of TBP-based Pol II pre-initiation complex (PIC), in which Pol II core assembles with general transcription factors and other specific initiation factors including GTF2E1, GTF2E2, GTF2F1, GTF2F2, TCEA1, ERCC2, ERCC3, GTF2H2, GTF2H3, GTF2H4, GTF2H5, GTF2A1, GTF2A2, GTF2B and TBP; this large multi-subunit PIC complex mediates DNA unwinding and targets Pol II core to the transcription start site where the first phosphodiester bond forms. Interacts with AATF. Interacts with PTPN6; this interaction promotes the recruitment of RNA pol II to the PCK1 promoter.

The protein resides in the nucleus. Core component of RNA polymerase II (Pol II), a DNA-dependent RNA polymerase which synthesizes mRNA precursors and many functional non-coding RNAs using the four ribonucleoside triphosphates as substrates. This chain is DNA-directed RNA polymerase II subunit RPB11 (Polr2j), found in Mus musculus (Mouse).